The sequence spans 210 residues: Leucyl/phenylalanyl-tRNA--protein transferase (210 aa).

Belongs to the L/F-transferase family.

The protein localises to the cytoplasm. It carries out the reaction N-terminal L-lysyl-[protein] + L-leucyl-tRNA(Leu) = N-terminal L-leucyl-L-lysyl-[protein] + tRNA(Leu) + H(+). The enzyme catalyses N-terminal L-arginyl-[protein] + L-leucyl-tRNA(Leu) = N-terminal L-leucyl-L-arginyl-[protein] + tRNA(Leu) + H(+). It catalyses the reaction L-phenylalanyl-tRNA(Phe) + an N-terminal L-alpha-aminoacyl-[protein] = an N-terminal L-phenylalanyl-L-alpha-aminoacyl-[protein] + tRNA(Phe). Functions in the N-end rule pathway of protein degradation where it conjugates Leu, Phe and, less efficiently, Met from aminoacyl-tRNAs to the N-termini of proteins containing an N-terminal arginine or lysine. In Ruegeria pomeroyi (strain ATCC 700808 / DSM 15171 / DSS-3) (Silicibacter pomeroyi), this protein is Leucyl/phenylalanyl-tRNA--protein transferase.